The chain runs to 466 residues: MPHSYDYDAIVIGSGPGGEGAAMGLVKQGARVAVIERYQNVGGGCTHWGTIPSKALRHAVSRIIEFNQNPLYSDHSRLLRSSFADILNHADNVINQQTRMRQGFYERNHCEILQGNARFVDEHTLALDCPDGSVETLTAEKFVIACGSRPYHPTDVDFTHPRIYDSDSILSMHHEPRHVLIYGAGVIGCEYASIFRGMDVKVDLINTRDRLLAFLDQEMSDSLSYHFWNSGVVIRHNEEYEKIEGCDDGVIMHLKSGKKLKADCLLYANGRTGNTDSLALQNIGLETDSRGQLKVNSMYQTAQPHVYAVGDVIGYPSLASAAYDQGRIAAQALVKGEATAHLIEDIPTGIYTIPEISSVGKTEQLLTAMKVPYEVGRAQFKHLARAQIVGMNVGTLKILFHRETKEILGIHCFGERAAEIIHIGQAIMEQKGGGNTIEYFVNTTFNYPTMAEAYRVAALNGLNRLF.

An FAD-binding site is contributed by 36 to 45; the sequence is ERYQNVGGGC.

This sequence belongs to the class-I pyridine nucleotide-disulfide oxidoreductase family. In terms of assembly, homooligomer; probable homooctamer. It depends on FAD as a cofactor.

It is found in the cytoplasm. The catalysed reaction is NAD(+) + NADPH = NADH + NADP(+). In terms of biological role, conversion of NADPH, generated by peripheral catabolic pathways, to NADH, which can enter the respiratory chain for energy generation. This chain is Soluble pyridine nucleotide transhydrogenase, found in Escherichia coli O157:H7.